A 327-amino-acid chain; its full sequence is Vacuolar protein sorting-associated protein 26A (327 aa).

The interval R306–M327 is disordered. S315 carries the post-translational modification Phosphoserine. Polar residues predominate over residues P316–M327.

It belongs to the VPS26 family. As to quaternary structure, component of the heterotrimeric retromer cargo-selective complex (CSC), also described as vacuolar protein sorting subcomplex (VPS), formed by VPS26 (VPS26A or VPS26B), VPS29 and VPS35. The CSC has a highly elongated structure with VPS26 and VPS29 binding independently at opposite distal ends of VPS35 as central platform. The CSC is believed to associate with variable sorting nexins to form functionally distinct retromer complex variants. The originally described retromer complex (also called SNX-BAR retromer) is a pentamer containing the CSC and a heterodimeric membrane-deforming subcomplex formed between SNX1 or SNX2 and SNX5 or SNX6 (also called SNX-BAR subcomplex); the respective CSC and SNX-BAR subcomplexes associate with low affinity. The CSC associates with SNX3 to form a SNX3-retromer complex. The CSC associates with SNX27, the WASH complex and the SNX-BAR subcomplex to form the SNX27-retromer complex. Interacts with VPS29, VPS35, SNX27, SNX1, SNX2, SNX5, SNX6, SNX3, RAB7A, ECPAS, EHD1, WASHC5, SORL1.

It is found in the cytoplasm. Its subcellular location is the endosome membrane. The protein localises to the early endosome. Functionally, acts as a component of the retromer cargo-selective complex (CSC). The CSC is believed to be the core functional component of retromer or respective retromer complex variants acting to prevent missorting of selected transmembrane cargo proteins into the lysosomal degradation pathway. The recruitment of the CSC to the endosomal membrane involves RAB7A and SNX3. The SNX-BAR retromer mediates retrograde transport of cargo proteins from endosomes to the trans-Golgi network (TGN) and is involved in endosome-to-plasma membrane transport for cargo protein recycling. The SNX3-retromer mediates the retrograde endosome-to-TGN transport of WLS distinct from the SNX-BAR retromer pathway. The SNX27-retromer is believed to be involved in endosome-to-plasma membrane trafficking and recycling of a broad spectrum of cargo proteins. The CSC complex seems to act as recruitment hub for other proteins, such as the WASH complex and TBC1D5. Required for retrograde transport of lysosomal enzyme receptor IGF2R. Required to regulate transcytosis of the polymeric immunoglobulin receptor (pIgR-pIgA). Required for the endosomal localization of WASHC2 (indicative for the WASH complex). Required for the endosomal localization of TBC1D5. Mediates retromer cargo recognition of SORL1 and is involved in trafficking of SORL1 implicated in sorting and processing of APP. Involved in retromer-independent lysosomal sorting of F2R. Involved in recycling of ADRB2. Acts redundantly with VSP26B in SNX-27 mediated endocytic recycling of SLC2A1/GLUT1. Enhances the affinity of SNX27 for PDZ-binding motifs in cargo proteins. The chain is Vacuolar protein sorting-associated protein 26A (VPS26A) from Bos taurus (Bovine).